Here is a 346-residue protein sequence, read N- to C-terminus: Alkanal monooxygenase alpha chain (346 aa).

In terms of assembly, heterodimer of an alpha and a beta chain.

The catalysed reaction is a long-chain fatty aldehyde + FMNH2 + O2 = a long-chain fatty acid + hnu + FMN + H2O + 2 H(+). In terms of biological role, light-emitting reaction in luminous bacteria. The protein is Alkanal monooxygenase alpha chain (luxA) of Photobacterium phosphoreum.